The following is an 86-amino-acid chain: UPF0297 protein SAHV_1604 (86 aa).

Belongs to the UPF0297 family.

The polypeptide is UPF0297 protein SAHV_1604 (Staphylococcus aureus (strain Mu3 / ATCC 700698)).